A 370-amino-acid chain; its full sequence is Phospho-N-acetylmuramoyl-pentapeptide-transferase (370 aa).

A run of 10 helical transmembrane segments spans residues 24–44 (YLTFRSGMAMLTAYIVAVAMG), 78–98 (TMGGFMILAGLFVAALLWADL), 103–123 (VWVVLLITGSYGLLGFMDDYA), 138–158 (KLVAQFIVAIIATVILILFAP), 177–197 (ALVINLGWFYVAFAAFTIAGF), 209–229 (GLAIVPVMFAASTFGLIAYLV), 245–265 (GVGELAVLCGAIIGGGMGFLW), 273–293 (IFMGDTGSLALGGALGAIAVC), 298–318 (LVLGIVGGLFVAEALSVMIQV), and 347–367 (TVVIRFWIVSMILAFIGLATL).

This sequence belongs to the glycosyltransferase 4 family. MraY subfamily. The cofactor is Mg(2+).

The protein resides in the cell inner membrane. It catalyses the reaction UDP-N-acetyl-alpha-D-muramoyl-L-alanyl-gamma-D-glutamyl-meso-2,6-diaminopimeloyl-D-alanyl-D-alanine + di-trans,octa-cis-undecaprenyl phosphate = di-trans,octa-cis-undecaprenyl diphospho-N-acetyl-alpha-D-muramoyl-L-alanyl-D-glutamyl-meso-2,6-diaminopimeloyl-D-alanyl-D-alanine + UMP. Its pathway is cell wall biogenesis; peptidoglycan biosynthesis. In terms of biological role, catalyzes the initial step of the lipid cycle reactions in the biosynthesis of the cell wall peptidoglycan: transfers peptidoglycan precursor phospho-MurNAc-pentapeptide from UDP-MurNAc-pentapeptide onto the lipid carrier undecaprenyl phosphate, yielding undecaprenyl-pyrophosphoryl-MurNAc-pentapeptide, known as lipid I. This chain is Phospho-N-acetylmuramoyl-pentapeptide-transferase, found in Caulobacter vibrioides (strain NA1000 / CB15N) (Caulobacter crescentus).